A 282-amino-acid chain; its full sequence is Undecaprenyl-diphosphatase (282 aa).

Transmembrane regions (helical) follow at residues 6 to 26 (LYFV…FIPV), 45 to 65 (SGKV…MWIF), 85 to 105 (LFTR…AIFI), 112 to 132 (FYHP…MLWV), 200 to 220 (ATEF…VYDM), 230 to 250 (HDLG…LLVV), and 262 to 282 (YRGF…WLAF).

It belongs to the UppP family.

The protein localises to the cell inner membrane. It carries out the reaction di-trans,octa-cis-undecaprenyl diphosphate + H2O = di-trans,octa-cis-undecaprenyl phosphate + phosphate + H(+). In terms of biological role, catalyzes the dephosphorylation of undecaprenyl diphosphate (UPP). Confers resistance to bacitracin. In Bordetella avium (strain 197N), this protein is Undecaprenyl-diphosphatase.